A 130-amino-acid chain; its full sequence is YopE regulator (130 aa).

Its function is as follows. Positive regulator of YopE. This is YopE regulator (yerA) from Yersinia pestis.